We begin with the raw amino-acid sequence, 362 residues long: Ferredoxin--NADP reductase, leaf isozyme 1, chloroplastic (362 aa).

A chloroplast-targeting transit peptide spans 1–62 (MAAVTAAAVS…DAAAVAAAPA (62 aa)). The FAD-binding FR-type domain occupies 83–205 (KEPYVGKCLL…TGPVGKEMLM (123 aa)). Residues 141–144 (RLYS), 162–164 (CVK), tyrosine 168, 179–181 (VCS), and threonine 220 contribute to the FAD site. NADP(+)-binding residues include serine 144 and lysine 164. A disulfide bond links cysteine 180 and cysteine 185. The residue at position 181 (serine 181) is a Phosphoserine. NADP(+) is bound by residues threonine 220, 252–253 (VP), 282–283 (SR), lysine 292, 321–322 (GL), and glutamate 360.

This sequence belongs to the ferredoxin--NADP reductase type 1 family. In terms of assembly, component of high molecular weight thylakoid LFNRs-containing protein complexes containing LIR1, LFNR1, LFNR2, TIC62 and TROL proteins. Interacts directly with LIR1 and TIC62; LIR1 increases the affinity of LFNR1 and LFNR2 for TIC62. It depends on FAD as a cofactor. In terms of processing, may form interchain disulfide bonds with LIR1.

The protein localises to the plastid. It is found in the chloroplast stroma. The protein resides in the chloroplast thylakoid membrane. It carries out the reaction 2 reduced [2Fe-2S]-[ferredoxin] + NADP(+) + H(+) = 2 oxidized [2Fe-2S]-[ferredoxin] + NADPH. It functions in the pathway energy metabolism; photosynthesis. Its function is as follows. May play a key role in regulating the relative amounts of cyclic and non-cyclic electron flow to meet the demands of the plant for ATP and reducing power. The protein is Ferredoxin--NADP reductase, leaf isozyme 1, chloroplastic of Oryza sativa subsp. japonica (Rice).